The following is a 159-amino-acid chain: Protein E6 (159 aa).

2 zinc fingers span residues 35–71 and 108–144; these read CVYC…CGKC and CYIC…CMQC.

The protein belongs to the papillomaviridae E6 protein family. Forms homodimers. Interacts with ubiquitin-protein ligase UBE3A/E6-AP; this interaction stimulates UBE3A ubiquitin activity. Interacts with host TP53 and EP300; this interaction inhibits TP53 activity.

The protein resides in the host cytoplasm. It localises to the host nucleus. Its function is as follows. Plays a major role in the induction and maintenance of cellular transformation. E6 associates with host UBE3A/E6-AP ubiquitin-protein ligase and modulates its activity. Sequesters tumor suppressor TP53 in the host cytoplasm and modulates its activity by interacting with host EP300 that results in the reduction of TP53 acetylation and activation. In turn, apoptosis induced by DNA damage is inhibited. E6 also protects host keratinocytes from apoptosis by mediating the degradation of host BAK1. May also inhibit host immune response. In Homo sapiens (Human), this protein is Protein E6.